A 130-amino-acid polypeptide reads, in one-letter code: Small ribosomal subunit protein uS8 (130 aa).

This sequence belongs to the universal ribosomal protein uS8 family. As to quaternary structure, part of the 30S ribosomal subunit. Contacts proteins S5 and S12.

Its function is as follows. One of the primary rRNA binding proteins, it binds directly to 16S rRNA central domain where it helps coordinate assembly of the platform of the 30S subunit. The protein is Small ribosomal subunit protein uS8 of Ruegeria sp. (strain TM1040) (Silicibacter sp.).